The sequence spans 199 residues: NAD(P)H dehydrogenase (quinone) (199 aa).

The Flavodoxin-like domain maps to 4–190; the sequence is VLVLYYSTYG…DGARYQGRHV (187 aa). FMN is bound by residues 10-15 and 78-80; these read STYGHI and TRY. Y12 provides a ligand contact to NAD(+). Residue W98 coordinates substrate. Residues 113–119 and H134 contribute to the FMN site; that span reads SSASQHG.

This sequence belongs to the WrbA family. FMN serves as cofactor.

The catalysed reaction is a quinone + NADH + H(+) = a quinol + NAD(+). The enzyme catalyses a quinone + NADPH + H(+) = a quinol + NADP(+). This chain is NAD(P)H dehydrogenase (quinone), found in Methylobacterium sp. (strain 4-46).